We begin with the raw amino-acid sequence, 129 residues long: uncharacterized protein (129 aa).

This is an uncharacterized protein from Homo sapiens (Human).